The chain runs to 244 residues: MMRTQCLLGLRTFVAFAAKLWSFFIYLLRRQIRTVIQYQTVRYDILPLSPLSRNRLAQVKRKILVLDLDETLIHSHHDGVLRPTVRPGTPPDFILKVVIDKHPVRFFVHKRPHVDFFLEVVSQWYELVVFTASMEIYGSAVADKLDNSRSILKRRYYRQHCTLELGSYIKDLSVVHSDLSSIVILDNSPGAYRSHPDNAIPIKSWFSDPSDTALLNLLPMLDALRFTADVRSVLSRNLHQHRLW.

The helical transmembrane segment at 7–29 (LLGLRTFVAFAAKLWSFFIYLLR) threads the bilayer. In terms of domain architecture, FCP1 homology spans 57-224 (AQVKRKILVL…LNLLPMLDAL (168 aa)).

This sequence belongs to the dullard family. As to quaternary structure, interacts with CNEP1R1; the complex dephosphorylates LPIN1 and LPIN2. In terms of tissue distribution, muscle specific with lower expression in other metabolic tissues.

It is found in the endoplasmic reticulum membrane. Its subcellular location is the nucleus membrane. It carries out the reaction O-phospho-L-seryl-[protein] + H2O = L-seryl-[protein] + phosphate. The enzyme catalyses O-phospho-L-threonyl-[protein] + H2O = L-threonyl-[protein] + phosphate. Functionally, serine/threonine protein phosphatase forming with CNEP1R1 an active phosphatase complex that dephosphorylates and may activate LPIN1 and LPIN2. LPIN1 and LPIN2 are phosphatidate phosphatases that catalyze the conversion of phosphatidic acid to diacylglycerol and control the metabolism of fatty acids at different levels. May indirectly modulate the lipid composition of nuclear and/or endoplasmic reticulum membranes and be required for proper nuclear membrane morphology and/or dynamics. May also indirectly regulate the production of lipid droplets and triacylglycerol. May antagonize BMP signaling. The polypeptide is CTD nuclear envelope phosphatase 1 (Ctdnep1) (Mus musculus (Mouse)).